A 574-amino-acid polypeptide reads, in one-letter code: Putative thiamine pyrophosphate-containing protein YdaP (574 aa).

The stretch at 28–55 forms a coiled coil; sequence DSINEFIEELRHERNQLKFIQTRHEEVA. Glutamate 52 provides a ligand contact to thiamine diphosphate. Residues 256–277 and 294–313 each bind FAD; these read IGTK…LGTS and DSDP…LVCD. The segment at 384–464 is thiamine pyrophosphate binding; it reads TVTVWMARHF…ITVVILNNEN (81 aa). 2 residues coordinate Mg(2+): aspartate 435 and asparagine 462.

The protein belongs to the TPP enzyme family. Mg(2+) is required as a cofactor. The cofactor is thiamine diphosphate.

The sequence is that of Putative thiamine pyrophosphate-containing protein YdaP (ydaP) from Bacillus subtilis (strain 168).